Consider the following 586-residue polypeptide: Transcription elongation regulator 1-like protein (586 aa).

The tract at residues 1–30 is disordered; sequence MQAGARFQRRRRQLQQQQPRRRQPLLWPMD. Over residues 7–23 the composition is skewed to basic residues; it reads FQRRRRQLQQQQPRRRQ. Residues 148-181 enclose the WW 1 domain; it reads TPIGKSWIDKRIPNCKIFFNNSFALDSTWIHPEE. Disordered stretches follow at residues 281 to 344 and 378 to 448; these read TSPV…PGSP and DLNR…QILL. Positions 306–317 are enriched in basic and acidic residues; that stretch reads KSRDGDKEDKEP. A WW 2 domain is found at 339 to 372; it reads PVPGSPWCVVWTGDDRVFFFNPTMHLSVWEKPMD. 3 stretches are compositionally biased toward basic and acidic residues: residues 378–387, 411–421, and 428–439; these read DLNRIIEDPP, DQDVKTKRNRT, and KPEEAKREDKGT. FF domains lie at 450–503 and 515–570; these read LEER…FVKT and KLLL…FILI.

The polypeptide is Transcription elongation regulator 1-like protein (TCERG1L) (Homo sapiens (Human)).